The chain runs to 219 residues: RPA-interacting protein (219 aa).

Serine 18 carries the phosphoserine modification. The segment at 137-212 (CPVCIKYNLR…PSLLMNCLTC (76 aa)) adopts an RIP-type zinc-finger fold. The mediates nuclear export stretch occupies residues 164-180 (STDLTEQKLRACLEENV).

Interacts with the RPA1 subunit of RPA complex. In terms of processing, sumoylated; required for localization in the nuclear PML body and transport of RPA complex in PML body. Upon UV irradiation and during S phase, it is desumoylated, releasing RPA complex that is translocated to sites of DNA damage. Sumoylation takes place at different Lys residues.

The protein resides in the nucleus. Mediates the import of RPA complex into the nucleus, possibly via some interaction with importin beta. Sumoylation mediates the localization of RPA complex into the PML body of the nucleus, thereby participating in RPA function in DNA metabolism. The polypeptide is RPA-interacting protein (Rpain) (Mus musculus (Mouse)).